Reading from the N-terminus, the 856-residue chain is Bifunctional uridylyltransferase/uridylyl-removing enzyme (856 aa).

The uridylyltransferase stretch occupies residues 1–320 (MTLSAAPLQH…YCQVPRVTQH (320 aa)). Residues 321 to 678 (ISEYFHAVNG…ARLADDHEGL (358 aa)) form a uridylyl-removing region. The 123-residue stretch at 439-561 (VDEHILMVVR…VRTPRRLAAL (123 aa)) folds into the HD domain. ACT domains lie at 679-760 (QVLI…LPPQ) and 788-856 (ILSI…ALRI).

The protein belongs to the GlnD family. The cofactor is Mg(2+).

The catalysed reaction is [protein-PII]-L-tyrosine + UTP = [protein-PII]-uridylyl-L-tyrosine + diphosphate. The enzyme catalyses [protein-PII]-uridylyl-L-tyrosine + H2O = [protein-PII]-L-tyrosine + UMP + H(+). With respect to regulation, uridylyltransferase (UTase) activity is inhibited by glutamine, while glutamine activates uridylyl-removing (UR) activity. In terms of biological role, modifies, by uridylylation and deuridylylation, the PII regulatory proteins (GlnB and homologs), in response to the nitrogen status of the cell that GlnD senses through the glutamine level. Under low glutamine levels, catalyzes the conversion of the PII proteins and UTP to PII-UMP and PPi, while under higher glutamine levels, GlnD hydrolyzes PII-UMP to PII and UMP (deuridylylation). Thus, controls uridylylation state and activity of the PII proteins, and plays an important role in the regulation of nitrogen assimilation and metabolism. The protein is Bifunctional uridylyltransferase/uridylyl-removing enzyme of Chromobacterium violaceum (strain ATCC 12472 / DSM 30191 / JCM 1249 / CCUG 213 / NBRC 12614 / NCIMB 9131 / NCTC 9757 / MK).